The chain runs to 477 residues: Octopamine receptor (477 aa).

Residues Met1 to Thr55 are Extracellular-facing. Residues Asn11 and Asn16 are each glycosylated (N-linked (GlcNAc...) asparagine). A helical membrane pass occupies residues Ala56–Phe78. The Cytoplasmic segment spans residues Thr79 to Asn88. A helical transmembrane segment spans residues Phe89–Val110. The Extracellular segment spans residues Ala111 to Met127. A helical membrane pass occupies residues Trp128–Leu148. Residues Asp149–Arg168 are Cytoplasmic-facing. The chain crosses the membrane as a helical span at residues Val169–Trp191. Residues Asn192–Ser216 are Extracellular-facing. The chain crosses the membrane as a helical span at residues Ser217–Ala238. Residues Thr239–Thr405 are Cytoplasmic-facing. Disordered regions lie at residues Ser256 to Asp317 and Val334 to Asp358. Composition is skewed to basic and acidic residues over residues Asn263–Asp272 and Asn279–Lys295. Basic residues predominate over residues Lys296–Tyr312. A helical membrane pass occupies residues Leu406 to Ile427. Residues Pro428–Phe439 are Extracellular-facing. Residues Ile440 to Ile460 form a helical membrane-spanning segment. The Cytoplasmic portion of the chain corresponds to Phe461–Pro477.

It belongs to the G-protein coupled receptor 1 family.

The protein localises to the cell membrane. In terms of biological role, receptor for octopamine. Octopamine (OA) is a neurotransmitter, neurohormone, and neuromodulator in invertebrates. The activity of this receptor is mediated by G proteins which activate adenylyl cyclase. The chain is Octopamine receptor from Heliothis virescens (Tobacco budworm moth).